The sequence spans 212 residues: Ribonuclease HII (212 aa).

The RNase H type-2 domain maps to 28-212; it reads SIIAGVDEVG…KSFAPIRQVV (185 aa). 3 residues coordinate a divalent metal cation: Asp-34, Glu-35, and Asp-127.

The protein belongs to the RNase HII family. The cofactor is Mn(2+). Mg(2+) is required as a cofactor.

It is found in the cytoplasm. It carries out the reaction Endonucleolytic cleavage to 5'-phosphomonoester.. Functionally, endonuclease that specifically degrades the RNA of RNA-DNA hybrids. The polypeptide is Ribonuclease HII (Chlamydia caviae (strain ATCC VR-813 / DSM 19441 / 03DC25 / GPIC) (Chlamydophila caviae)).